The sequence spans 446 residues: Gasdermin-A (446 aa).

A triggers pyroptosis region spans residues 1–252 (MTMFENVTRA…FILIQASDVG (252 aa)). 9-13 (RALAR) contacts a cardiolipin. The next 4 beta stranded transmembrane spans lie at 78–95 (NFSF…DVDV), 99–120 (VKVK…TLSV), 164–180 (VTLE…SLPF), and 184–198 (LGLQ…AVTI).

Belongs to the gasdermin family. Homooligomer; homooligomeric ring-shaped pore complex containing 18-36 subunits when inserted in the membrane. Cleavage by bacterial SpeB relieves autoinhibition by releasing the N-terminal moiety (Gasdermin-A, N-terminal) that initiates pyroptosis. In terms of processing, palmitoylated. In terms of tissue distribution, expressed predominantly in the gastrointestinal (GI) tract and in the skin at a lower level. In the GI tract, the expression is highly restricted to the esophagus and forestomach.

The protein resides in the cytoplasm. Its subcellular location is the perinuclear region. It is found in the cytosol. The protein localises to the cell membrane. With respect to regulation, the full-length protein before cleavage is inactive: intramolecular interactions between N- and C-terminal domains mediate autoinhibition in the absence of activation signal. The intrinsic pyroptosis-inducing activity is carried by the released N-terminal moiety (Gasdermin-A, N-terminal) following cleavage by bacterial effector protein SpeB. Its function is as follows. This form constitutes the precursor of the pore-forming protein and acts as a sensor of bacterial infection: upon infection, specifically cleaved by bacterial effector protein SpeB in epithelial cells, releasing the N-terminal moiety (Gasdermin-A, N-terminal) that binds to membranes and forms pores, triggering pyroptosis. Pore-forming protein that causes membrane permeabilization and pyroptosis. Released upon cleavage by bacterial effector protein SpeB, and binds to membrane inner leaflet lipids. Homooligomerizes within the membrane and forms pores of 10-15 nanometers (nm) of inner diameter, triggering pyroptosis. Pyroptosis triggers the elimination of the infected skin cell, depriving the pathogen of its protective niche, while inducing an inflammatory response. This ultimately prevents bacterial penetration of the epithelial barrier and a subsequent systemic dissemination of the pathogen. Binds to cardiolipin and other acidic phospholipids, such as phosphatidylserine, which mediate its targeting to the inner leaflet membrane. In Mus musculus (Mouse), this protein is Gasdermin-A (Gsdma).